The following is a 109-amino-acid chain: Large ribosomal subunit protein uL22 (109 aa).

It belongs to the universal ribosomal protein uL22 family. In terms of assembly, part of the 50S ribosomal subunit.

Its function is as follows. This protein binds specifically to 23S rRNA; its binding is stimulated by other ribosomal proteins, e.g. L4, L17, and L20. It is important during the early stages of 50S assembly. It makes multiple contacts with different domains of the 23S rRNA in the assembled 50S subunit and ribosome. In terms of biological role, the globular domain of the protein is located near the polypeptide exit tunnel on the outside of the subunit, while an extended beta-hairpin is found that lines the wall of the exit tunnel in the center of the 70S ribosome. This Ralstonia nicotianae (strain ATCC BAA-1114 / GMI1000) (Ralstonia solanacearum) protein is Large ribosomal subunit protein uL22.